Consider the following 125-residue polypeptide: Large ribosomal subunit protein bL12 (125 aa).

It belongs to the bacterial ribosomal protein bL12 family. In terms of assembly, homodimer. Part of the ribosomal stalk of the 50S ribosomal subunit. Forms a multimeric L10(L12)X complex, where L10 forms an elongated spine to which 2 to 4 L12 dimers bind in a sequential fashion. Binds GTP-bound translation factors.

Functionally, forms part of the ribosomal stalk which helps the ribosome interact with GTP-bound translation factors. Is thus essential for accurate translation. This Caldanaerobacter subterraneus subsp. tengcongensis (strain DSM 15242 / JCM 11007 / NBRC 100824 / MB4) (Thermoanaerobacter tengcongensis) protein is Large ribosomal subunit protein bL12.